The sequence spans 349 residues: D-alanine--D-alanine ligase (349 aa).

Residues 140 to 345 (NILFEAMGIP…MKDVFTWLLE (206 aa)) enclose the ATP-grasp domain. 169–224 (NLSFSYPVFIKPTLGGSSVNTGMAKTAEEAMTLVDKIFVTDDRVLVQKLVSGTEVS) serves as a coordination point for ATP. D300, E312, and N314 together coordinate Mg(2+).

The protein belongs to the D-alanine--D-alanine ligase family. Mg(2+) serves as cofactor. Mn(2+) is required as a cofactor.

The protein resides in the cytoplasm. The enzyme catalyses 2 D-alanine + ATP = D-alanyl-D-alanine + ADP + phosphate + H(+). The protein operates within cell wall biogenesis; peptidoglycan biosynthesis. In terms of biological role, cell wall formation. In Leptospira biflexa serovar Patoc (strain Patoc 1 / Ames), this protein is D-alanine--D-alanine ligase.